The chain runs to 149 residues: SsrA-binding protein (149 aa).

This sequence belongs to the SmpB family.

The protein localises to the cytoplasm. Its function is as follows. Required for rescue of stalled ribosomes mediated by trans-translation. Binds to transfer-messenger RNA (tmRNA), required for stable association of tmRNA with ribosomes. tmRNA and SmpB together mimic tRNA shape, replacing the anticodon stem-loop with SmpB. tmRNA is encoded by the ssrA gene; the 2 termini fold to resemble tRNA(Ala) and it encodes a 'tag peptide', a short internal open reading frame. During trans-translation Ala-aminoacylated tmRNA acts like a tRNA, entering the A-site of stalled ribosomes, displacing the stalled mRNA. The ribosome then switches to translate the ORF on the tmRNA; the nascent peptide is terminated with the 'tag peptide' encoded by the tmRNA and targeted for degradation. The ribosome is freed to recommence translation, which seems to be the essential function of trans-translation. This chain is SsrA-binding protein, found in Anaplasma marginale (strain Florida).